The chain runs to 323 residues: Elongation factor P--(R)-beta-lysine ligase (323 aa).

S74–E76 provides a ligand contact to substrate. ATP is bound by residues R98–E100 and N107. Y116 lines the substrate pocket. ATP is bound at residue E242 to L243. E249 contacts substrate. G298 provides a ligand contact to ATP.

This sequence belongs to the class-II aminoacyl-tRNA synthetase family. EpmA subfamily. Homodimer.

The catalysed reaction is D-beta-lysine + L-lysyl-[protein] + ATP = N(6)-((3R)-3,6-diaminohexanoyl)-L-lysyl-[protein] + AMP + diphosphate + H(+). In terms of biological role, with EpmB is involved in the beta-lysylation step of the post-translational modification of translation elongation factor P (EF-P). Catalyzes the ATP-dependent activation of (R)-beta-lysine produced by EpmB, forming a lysyl-adenylate, from which the beta-lysyl moiety is then transferred to the epsilon-amino group of a conserved specific lysine residue in EF-P. The sequence is that of Elongation factor P--(R)-beta-lysine ligase from Vibrio vulnificus (strain YJ016).